A 212-amino-acid polypeptide reads, in one-letter code: Glutathione S-transferase hmp2 (212 aa).

The 80-residue stretch at 1–80 (MVIKLYGSAM…YLARKYDSGT (80 aa)) folds into the GST N-terminal domain. Glutathione contacts are provided by residues 51-52 (KV) and 64-65 (ES). The GST C-terminal domain occupies 88 to 212 (DHEAYGRFEQ…TWIKATAEAR (125 aa)).

Belongs to the GST superfamily.

It catalyses the reaction RX + glutathione = an S-substituted glutathione + a halide anion + H(+). It participates in secondary metabolite biosynthesis. In terms of biological role, glutathione S-transferase; part of the gene cluster that mediates the biosynthesis of hypothemycin, a resorcylic acid lactone (RAL) that irreversibly inhibits a subset of protein kinases with a conserved cysteine in the ATP binding site such as human ERK2. The first step is performed by both PKSs hmp3 and hmp8 and leads to the production of 7',8'-dehydrozearalenol (DHZ). The highly reducing PKS hpm8 synthesizes the reduced hexaketide (7S,11S,2E,8E)-7,11-dihydroxy-dodeca-2,8-dienoate, which is transferred downstream to the non-reducing PKS hpm3. Hpm3 then extends the reduced hexaketide to a nonaketide, after which regioselective cyclization and macrolactonization affords DHZ. The next step is the conversion of DHZ into aigialomycin C and is performed by the O-methyltransferase hmp5, the FAD-binding monooxygenase hmp7, and the cytochrome P450 monooxygenase hmp1. The wide substrate tolerance of the hmp5 and hmp7 implies that the reactions from DHZ to aigialomycin C can occur in any order. The steps from aigialomycin C to hypothemycin are less well established. The FAD-linked oxidoreductase hmp9 presumably catalyzes oxidation of the C-6' hydroxyl to a ketone. The timing of this oxidation is important, since the resulting enone functional group is a Michael acceptor that can react spontaneously with glutathione, an abundant metabolite in fungal cells. The glutathione S-transferase hmp2 catalyzes cis-trans isomerization of the 7',8' double bond with equilibrium favoring the trans isomer. The hpm6-encoded transporter might preferentially pump hypothemycin out of the cell relative to the trans isomer aigialomycin A. The cis-to-trans isomerization may be coupled with C-4' hydroxylation, since all known hypothemycin analogs containing the enone functional group also have hydroxyl groups at both C-4' and C-5'. In Hypomyces subiculosus (Nectria subiculosa), this protein is Glutathione S-transferase hmp2.